The sequence spans 363 residues: UDP-N-acetylglucosamine--N-acetylmuramyl-(pentapeptide) pyrophosphoryl-undecaprenol N-acetylglucosamine transferase (363 aa).

Residues 10–12 (TGG), Asn124, Ser195, Ile250, and Gln295 contribute to the UDP-N-acetyl-alpha-D-glucosamine site.

This sequence belongs to the glycosyltransferase 28 family. MurG subfamily.

It localises to the cell membrane. It carries out the reaction di-trans,octa-cis-undecaprenyl diphospho-N-acetyl-alpha-D-muramoyl-L-alanyl-D-glutamyl-meso-2,6-diaminopimeloyl-D-alanyl-D-alanine + UDP-N-acetyl-alpha-D-glucosamine = di-trans,octa-cis-undecaprenyl diphospho-[N-acetyl-alpha-D-glucosaminyl-(1-&gt;4)]-N-acetyl-alpha-D-muramoyl-L-alanyl-D-glutamyl-meso-2,6-diaminopimeloyl-D-alanyl-D-alanine + UDP + H(+). The protein operates within cell wall biogenesis; peptidoglycan biosynthesis. In terms of biological role, cell wall formation. Catalyzes the transfer of a GlcNAc subunit on undecaprenyl-pyrophosphoryl-MurNAc-pentapeptide (lipid intermediate I) to form undecaprenyl-pyrophosphoryl-MurNAc-(pentapeptide)GlcNAc (lipid intermediate II). The sequence is that of UDP-N-acetylglucosamine--N-acetylmuramyl-(pentapeptide) pyrophosphoryl-undecaprenol N-acetylglucosamine transferase from Listeria monocytogenes serovar 1/2a (strain ATCC BAA-679 / EGD-e).